Here is a 1088-residue protein sequence, read N- to C-terminus: RNA-directed RNA polymerase (1088 aa).

The 187-residue stretch at 501-687 (LSYGDVTRFL…AKRYIAGGKI (187 aa)) folds into the RdRp catalytic domain.

This sequence belongs to the reoviridae RNA-directed RNA polymerase family. As to quaternary structure, interacts with VP3 (Potential). Interacts with VP2; this interaction activates VP1. Interacts with NSP5; this interaction is probably necessary for the formation of functional virus factories. Interacts with NSP2; this interaction is weak. It depends on Mg(2+) as a cofactor.

Its subcellular location is the virion. It carries out the reaction RNA(n) + a ribonucleoside 5'-triphosphate = RNA(n+1) + diphosphate. RNA-directed RNA polymerase that is involved in both transcription and genome replication. Together with VP3 capping enzyme, forms an enzyme complex positioned near the channels situated at each of the five-fold vertices of the core. Following infection, the outermost layer of the virus is lost, leaving a double-layered particle (DLP) made up of the core and VP6 shell. VP1 then catalyzes the transcription of fully conservative plus-strand genomic RNAs that are extruded through the DLP's channels into the cytoplasm where they function as mRNAs for translation of viral proteins. One copy of each of the viral (+)RNAs is also recruited during core assembly, together with newly synthesized polymerase complexes and VP2. The polymerase of these novo-formed particles catalyzes the synthesis of complementary minus-strands leading to dsRNA formation. To do so, the polymerase specifically recognizes and binds 4 bases 5'-UGUG-3' in the conserved 3'-sequence of plus-strand RNA templates. VP2 presumably activates the autoinhibited VP1-RNA complex to coordinate packaging and genome replication. Once dsRNA synthesis is complete, the polymerase switches to the transcriptional mode, thus providing secondary transcription. The sequence is that of RNA-directed RNA polymerase from Rotavirus A (strain RVA/SA11-Both/G3P5B[2]) (RV-A).